The following is a 409-amino-acid chain: Putative competence-damage inducible protein (409 aa).

Belongs to the CinA family.

In Clostridium botulinum (strain Okra / Type B1), this protein is Putative competence-damage inducible protein.